The following is a 415-amino-acid chain: Casein kinase I isoform delta (415 aa).

The region spanning 9–277 (YRLGRKIGSG…YLRQLFRNLF (269 aa)) is the Protein kinase domain. ATP contacts are provided by residues 15–23 (IGSGSFGDI) and K38. The active-site Proton acceptor is the D128. Positions 301-315 (AEDAERERREREERL) are enriched in basic and acidic residues. The disordered stretch occupies residues 301 to 415 (AEDAERERRE…SSGLPSTVHR (115 aa)). Residues 317-342 (HTRNPAVRGLPSTASGRLRGTQEVTP) form an autoinhibitory region. Low complexity predominate over residues 341-352 (TPSTPLTPTSHT). Residues 380–415 (NVSSSDLTSRQDTSRMSTSQIPSRVTSSGLPSTVHR) are compositionally biased toward polar residues.

This sequence belongs to the protein kinase superfamily. As to quaternary structure, monomer. Interacts with per1 and per2. Component of the circadian core oscillator. Post-translationally, autophosphorylated on serine and threonine residues. In terms of tissue distribution, detected in retina photoreceptor cells.

The protein localises to the cytoplasm. The protein resides in the nucleus. It carries out the reaction L-seryl-[protein] + ATP = O-phospho-L-seryl-[protein] + ADP + H(+). It catalyses the reaction L-threonyl-[protein] + ATP = O-phospho-L-threonyl-[protein] + ADP + H(+). The catalysed reaction is L-seryl-[tau protein] + ATP = O-phospho-L-seryl-[tau protein] + ADP + H(+). The enzyme catalyses L-threonyl-[tau protein] + ATP = O-phospho-L-threonyl-[tau protein] + ADP + H(+). With respect to regulation, exhibits substrate-dependent heparin activation. In terms of biological role, casein kinases are operationally defined by their preferential utilization of acidic proteins such as caseins as substrates. Can phosphorylate a large number of proteins. Central component of the circadian clock. May act as a negative regulator of circadian rhythmicity by phosphorylating per1 and per2, which may lead to their degradation. Participates in wnt signaling. Functionally, has no kinase activity. This chain is Casein kinase I isoform delta (csnk1d), found in Xenopus laevis (African clawed frog).